A 280-amino-acid polypeptide reads, in one-letter code: Energy-coupling factor transporter ATP-binding protein EcfA2 (280 aa).

The region spanning 3-245 is the ABC transporter domain; the sequence is IEFKNVSYTY…VELLESKQLG (243 aa). 40 to 47 is a binding site for ATP; the sequence is GHTGSGKS.

The protein belongs to the ABC transporter superfamily. Energy-coupling factor EcfA family. As to quaternary structure, forms a stable energy-coupling factor (ECF) transporter complex composed of 2 membrane-embedded substrate-binding proteins (S component), 2 ATP-binding proteins (A component) and 2 transmembrane proteins (T component).

It is found in the cell membrane. ATP-binding (A) component of a common energy-coupling factor (ECF) ABC-transporter complex. Unlike classic ABC transporters this ECF transporter provides the energy necessary to transport a number of different substrates. This is Energy-coupling factor transporter ATP-binding protein EcfA2 from Streptococcus agalactiae serotype Ia (strain ATCC 27591 / A909 / CDC SS700).